The chain runs to 495 residues: Ferruginol synthase (495 aa).

Residue methionine 1 is a topological domain, lumenal. The chain crosses the membrane as a helical span at residues 2-22 (DSFPLLAALFFIAATITFLSF). The Cytoplasmic portion of the chain corresponds to 23–495 (RRRRNLPPGP…PLRIIPIVKS (473 aa)). Cysteine 437 contacts heme.

Belongs to the cytochrome P450 family. Heme is required as a cofactor. Expression is more abundant in the rhizome.

It localises to the endoplasmic reticulum membrane. The enzyme catalyses abieta-8,11,13-triene + reduced [NADPH--hemoprotein reductase] + O2 = ferruginol + oxidized [NADPH--hemoprotein reductase] + H2O + H(+). In terms of biological role, cytochrome P450 enzyme (CYP) which catalyzes a unique two-electron oxidation cascade on abieta-8,11,13-triene to produce ferruginol, an intermediate in tanshinone biosynthesis. This is Ferruginol synthase from Salvia miltiorrhiza (Chinese sage).